The following is an 81-amino-acid chain: Cytochrome b559 subunit alpha (81 aa).

The helical transmembrane segment at 21–35 threads the bilayer; the sequence is VIHSITIPALFIAGW. Residue His-23 participates in heme binding.

It belongs to the PsbE/PsbF family. As to quaternary structure, heterodimer of an alpha subunit and a beta subunit. PSII is composed of 1 copy each of membrane proteins PsbA, PsbB, PsbC, PsbD, PsbE, PsbF, PsbH, PsbI, PsbJ, PsbK, PsbL, PsbM, PsbT, PsbX, PsbY, PsbZ, Psb30/Ycf12, at least 3 peripheral proteins of the oxygen-evolving complex and a large number of cofactors. It forms dimeric complexes. It depends on heme b as a cofactor.

The protein resides in the plastid. It localises to the chloroplast thylakoid membrane. This b-type cytochrome is tightly associated with the reaction center of photosystem II (PSII). PSII is a light-driven water:plastoquinone oxidoreductase that uses light energy to abstract electrons from H(2)O, generating O(2) and a proton gradient subsequently used for ATP formation. It consists of a core antenna complex that captures photons, and an electron transfer chain that converts photonic excitation into a charge separation. The chain is Cytochrome b559 subunit alpha from Tetradesmus obliquus (Green alga).